The chain runs to 229 residues: Demethylmenaquinone methyltransferase (229 aa).

Residues Thr-62, Asp-80, 100–101 (DG), and Ser-117 each bind S-adenosyl-L-methionine.

It belongs to the class I-like SAM-binding methyltransferase superfamily. MenG/UbiE family.

It catalyses the reaction a 2-demethylmenaquinol + S-adenosyl-L-methionine = a menaquinol + S-adenosyl-L-homocysteine + H(+). It functions in the pathway quinol/quinone metabolism; menaquinone biosynthesis; menaquinol from 1,4-dihydroxy-2-naphthoate: step 2/2. Functionally, methyltransferase required for the conversion of demethylmenaquinol (DMKH2) to menaquinol (MKH2). This chain is Demethylmenaquinone methyltransferase, found in Corynebacterium kroppenstedtii (strain DSM 44385 / JCM 11950 / CIP 105744 / CCUG 35717).